The following is a 70-amino-acid chain: Movement protein TGBp3 (70 aa).

Topologically, residues 1–4 (MFPR) are lumenal. The chain crosses the membrane as a helical span at residues 5–25 (SGLGLAVAAAVVAYLVLLLAQ). At 26–70 (QLYMSNSSQCTIVITGESVSVVGCVYSEAFIELVKGLKPYYHPLG) the chain is on the cytoplasmic side.

Belongs to the Tymovirales TGBp3 protein family.

It is found in the host endoplasmic reticulum membrane. Its function is as follows. Plays a role in viral cell-to-cell propagation, by facilitating genome transport to neighboring plant cells through plasmosdesmata. May induce the formation of granular vesicles derived from the Endoplasmic reticulum, which align on actin filaments. The chain is Movement protein TGBp3 from Crataegus (hawthorn).